The primary structure comprises 93 residues: Alpha-defensin 16 (93 aa).

An N-terminal signal peptide occupies residues 1–19; sequence MKTLILLSALVLLAFQVQA. The propeptide occupies 20–58; it reads DPIQNTDEETKTEEQPGEEDQAVSVSFGDPEGTSLQEES. The disordered stretch occupies residues 22–54; the sequence is IQNTDEETKTEEQPGEEDQAVSVSFGDPEGTSL. 3 cysteine pairs are disulfide-bonded: C64–C92, C66–C81, and C71–C91.

The protein belongs to the alpha-defensin family. In terms of tissue distribution, paneth cells of the small bowel.

Its subcellular location is the secreted. Its function is as follows. Probably contributes to the antimicrobial barrier function of the small bowel mucosa. The sequence is that of Alpha-defensin 16 (Defa16) from Mus musculus (Mouse).